The primary structure comprises 223 residues: Uridylate kinase (223 aa).

9-10 is an ATP binding site; it reads GS. Gly-42 is a binding site for UMP. The ATP site is built by Gly-43 and Arg-47. Residues Asp-64 and 112–118 contribute to the UMP site; that span reads VSPGQTT. Residues Thr-138, Tyr-144, and Asp-147 each coordinate ATP.

The protein belongs to the UMP kinase family. Homohexamer.

It is found in the cytoplasm. It catalyses the reaction UMP + ATP = UDP + ADP. It functions in the pathway pyrimidine metabolism; CTP biosynthesis via de novo pathway; UDP from UMP (UMPK route): step 1/1. With respect to regulation, inhibited by UTP. Catalyzes the reversible phosphorylation of UMP to UDP. This is Uridylate kinase from Methanothrix thermoacetophila (strain DSM 6194 / JCM 14653 / NBRC 101360 / PT) (Methanosaeta thermophila).